Reading from the N-terminus, the 504-residue chain is Melianol synthase CYP71BQ5 (504 aa).

Residues 2–22 (EFRLPSLPVFLSFLLFFLMLV) traverse the membrane as a helical segment. Cys-442 is a binding site for heme.

This sequence belongs to the cytochrome P450 family. It depends on heme as a cofactor. Mainly expressed in fruits and leaves.

It localises to the membrane. The enzyme catalyses dihydroniloticin + 2 reduced [NADPH--hemoprotein reductase] + 2 O2 = melianol + 2 oxidized [NADPH--hemoprotein reductase] + 3 H2O + 2 H(+). It participates in secondary metabolite biosynthesis; terpenoid biosynthesis. Functionally, monooxygenase involved in the biosynthesis of limonoids triterpene natural products such as azadirachtin, an antifeedant widely used as bioinsecticide, and possessing many medicinal applications including anti-tumoral, anti-malarial, anti-rheumatic, antibacterial, anti-inflammatory, anti-pyretic and diuretic effects. Catalyzes the conversion of dihydroniloticin to the protolimonoid melianol. The polypeptide is Melianol synthase CYP71BQ5 (Azadirachta indica (Neem tree)).